A 143-amino-acid polypeptide reads, in one-letter code: Transcriptional regulator MraZ (143 aa).

SpoVT-AbrB domains are found at residues 5–47 (EYSH…PMPV) and 76–119 (AMEA…SDEN).

The protein belongs to the MraZ family. Forms oligomers.

It localises to the cytoplasm. It is found in the nucleoid. This Leuconostoc citreum (strain KM20) protein is Transcriptional regulator MraZ.